The following is a 501-amino-acid chain: Phenylalanine--tRNA ligase alpha subunit (501 aa).

Residues Thr-344, 383 to 385 (QID), and Phe-424 each bind L-phenylalanine. Glu-426 serves as a coordination point for Mg(2+). Phe-449 contributes to the L-phenylalanine binding site.

The protein belongs to the class-II aminoacyl-tRNA synthetase family. Phe-tRNA synthetase alpha subunit type 2 subfamily. Tetramer of two alpha and two beta subunits. Mg(2+) serves as cofactor.

It localises to the cytoplasm. It catalyses the reaction tRNA(Phe) + L-phenylalanine + ATP = L-phenylalanyl-tRNA(Phe) + AMP + diphosphate + H(+). This is Phenylalanine--tRNA ligase alpha subunit from Thermococcus kodakarensis (strain ATCC BAA-918 / JCM 12380 / KOD1) (Pyrococcus kodakaraensis (strain KOD1)).